A 767-amino-acid chain; its full sequence is Protein NLP3 (767 aa).

Disordered stretches follow at residues 462–494, 590–622, and 646–672; these read ATPPLTQEDPKGKQVSFSFSSASSLENRKRKTK, INPTQTVHVPPKSPPSSSGSQSSSGSSTCCSSE, and HEDQRPVRVTSSLPPLPSATTPRKAKD. The RWP-RK domain maps to 482–566; sequence SASSLENRKR…MDSVEGVQGS (85 aa). Residues 485–506 are a coiled coil; sequence SLENRKRKTKAEKDITLDTLRQ. Composition is skewed to low complexity over residues 604-622 and 655-667; these read PSSSGSQSSSGSSTCCSSE and TSSLPPLPSATTP. The region spanning 673–759 is the PB1 domain; it reads GMKVKAMFGD…ETIRILVHHP (87 aa).

The protein resides in the nucleus. Its function is as follows. Probable transcription factor. This Arabidopsis thaliana (Mouse-ear cress) protein is Protein NLP3 (NLP3).